The chain runs to 464 residues: 3-isopropylmalate dehydratase large subunit (464 aa).

Residues Cys-337, Cys-397, and Cys-400 each coordinate [4Fe-4S] cluster.

The protein belongs to the aconitase/IPM isomerase family. LeuC type 1 subfamily. As to quaternary structure, heterodimer of LeuC and LeuD. The cofactor is [4Fe-4S] cluster.

It carries out the reaction (2R,3S)-3-isopropylmalate = (2S)-2-isopropylmalate. Its pathway is amino-acid biosynthesis; L-leucine biosynthesis; L-leucine from 3-methyl-2-oxobutanoate: step 2/4. In terms of biological role, catalyzes the isomerization between 2-isopropylmalate and 3-isopropylmalate, via the formation of 2-isopropylmaleate. The protein is 3-isopropylmalate dehydratase large subunit of Bacillus cytotoxicus (strain DSM 22905 / CIP 110041 / 391-98 / NVH 391-98).